The chain runs to 335 residues: MNLDDLLNSALDELETQEKEQPTTTKTTTTTTTTTTSNTTKTINNNNNTVTPSTIKPTYNKPPPPSLGNDDLLNTNVNDMMDIFKKLLGEETLKNLDAGFDKEYNKDINNNSDDSNNGGLPSEEDKKKIDELAEKLATMFGVSEDSDLGDMDNFKPFLEELTKAGGLNFNNDELNNNSNNNNKNNNNSGVHIDNFESSISDTLKNLADNASNKTDNNGGIDDLFSNLSKLMEGQNFNLDGEETGQINDLFEESIQFMAENYPDWIEKNIDHYPPEETERFKNQSEIFSMIAQQKEGEADMLDSGLLARMSQLGNLPDSFCEDSIKKVETEIDEKE.

Disordered regions lie at residues 14–70 and 104–124; these read LETQ…LGND and YNKDINNNSDDSNNGGLPSEE. Composition is skewed to low complexity over residues 22 to 55 and 109 to 119; these read PTTTKTTTTTTTTTTSNTTKTINNNNNTVTPSTI and NNNSDDSNNGG.

The protein belongs to the peroxin-19 family.

It is found in the peroxisome. The polypeptide is Putative peroxisomal biogenesis factor 19 (pex19) (Dictyostelium discoideum (Social amoeba)).